Consider the following 1370-residue polypeptide: DNA polymerase II large subunit (1370 aa).

Disordered regions lie at residues 279–317 (IGADDADEDTPDAGSDSDATDEGDAPSASTDAEEPPRAA) and 1041–1081 (AGDA…DGGS).

It belongs to the archaeal DNA polymerase II family. In terms of assembly, heterodimer of a large subunit and a small subunit. This protein undergoes a protein self splicing that involves a post-translational excision of the intervening region (intein) followed by peptide ligation.

The enzyme catalyses DNA(n) + a 2'-deoxyribonucleoside 5'-triphosphate = DNA(n+1) + diphosphate. The catalysed reaction is Exonucleolytic cleavage in the 3'- to 5'-direction to yield nucleoside 5'-phosphates.. In terms of biological role, possesses two activities: a DNA synthesis (polymerase) and an exonucleolytic activity that degrades single-stranded DNA in the 3'- to 5'-direction. Has a template-primer preference which is characteristic of a replicative DNA polymerase. The polypeptide is DNA polymerase II large subunit (polC) (Halobacterium salinarum (strain ATCC 700922 / JCM 11081 / NRC-1) (Halobacterium halobium)).